The sequence spans 367 residues: Heme A synthase (367 aa).

The next 5 helical transmembrane spans lie at 26-46, 111-131, 139-159, 174-194, and 212-232; these read IRGW…VGGA, LLAR…WVTG, LPLL…WWMV, LATH…IYRG, and AGAI…VAGL. Residue His274 participates in heme binding. A run of 3 helical transmembrane segments spans residues 276–296, 305–325, and 327–347; these read LGAY…LRAA, SVLL…TLLL, and VPIG…GFAI. Residue His335 coordinates heme.

This sequence belongs to the COX15/CtaA family. Type 2 subfamily. As to quaternary structure, interacts with CtaB. It depends on heme b as a cofactor.

It localises to the cell membrane. The catalysed reaction is Fe(II)-heme o + 2 A + H2O = Fe(II)-heme a + 2 AH2. It functions in the pathway porphyrin-containing compound metabolism; heme A biosynthesis; heme A from heme O: step 1/1. Catalyzes the conversion of heme O to heme A by two successive hydroxylations of the methyl group at C8. The first hydroxylation forms heme I, the second hydroxylation results in an unstable dihydroxymethyl group, which spontaneously dehydrates, resulting in the formyl group of heme A. The polypeptide is Heme A synthase (Rhizobium meliloti (strain 1021) (Ensifer meliloti)).